Consider the following 204-residue polypeptide: Thymidine kinase (204 aa).

ATP contacts are provided by residues 15–22 (GSMFSGKS) and 88–91 (DEVQ). The active-site Proton acceptor is Glu-89. Zn(2+)-binding residues include Cys-145, Cys-148, Cys-183, and Cys-186.

The protein belongs to the thymidine kinase family. As to quaternary structure, homotetramer.

The protein localises to the cytoplasm. The enzyme catalyses thymidine + ATP = dTMP + ADP + H(+). In Halalkalibacterium halodurans (strain ATCC BAA-125 / DSM 18197 / FERM 7344 / JCM 9153 / C-125) (Bacillus halodurans), this protein is Thymidine kinase.